A 343-amino-acid polypeptide reads, in one-letter code: Phosphoribosylformylglycinamidine cyclo-ligase (343 aa).

This sequence belongs to the AIR synthase family.

It is found in the cytoplasm. The enzyme catalyses 2-formamido-N(1)-(5-O-phospho-beta-D-ribosyl)acetamidine + ATP = 5-amino-1-(5-phospho-beta-D-ribosyl)imidazole + ADP + phosphate + H(+). It functions in the pathway purine metabolism; IMP biosynthesis via de novo pathway; 5-amino-1-(5-phospho-D-ribosyl)imidazole from N(2)-formyl-N(1)-(5-phospho-D-ribosyl)glycinamide: step 2/2. The sequence is that of Phosphoribosylformylglycinamidine cyclo-ligase from Carboxydothermus hydrogenoformans (strain ATCC BAA-161 / DSM 6008 / Z-2901).